Consider the following 146-residue polypeptide: Cyanate hydratase (146 aa).

Catalysis depends on residues arginine 87, glutamate 90, and serine 113.

It belongs to the cyanase family.

It carries out the reaction cyanate + hydrogencarbonate + 3 H(+) = NH4(+) + 2 CO2. Its function is as follows. Catalyzes the reaction of cyanate with bicarbonate to produce ammonia and carbon dioxide. The chain is Cyanate hydratase from Teredinibacter turnerae (strain ATCC 39867 / T7901).